The primary structure comprises 292 residues: Ornithine decarboxylase antizyme (292 aa).

Belongs to the ODC antizyme family. As to quaternary structure, interacts with ODC/SPE1 and thereby sterically blocks ODC homodimerization.

Its function is as follows. Ornithine decarboxylase (ODC) antizyme protein that negatively regulates ODC activity and intracellular polyamine biosynthesis in response to increased intracellular polyamine levels. Binds to ODC/SPE1 monomers, inhibiting the assembly of the functional ODC homodimer, and targets the monomers for ubiquitin-independent proteolytic destruction by the 26S proteasome. This Saccharomyces cerevisiae (strain ATCC 204508 / S288c) (Baker's yeast) protein is Ornithine decarboxylase antizyme (OAZ1).